We begin with the raw amino-acid sequence, 163 residues long: MILEDTADFLAALPSMRSLMGLDLGTQTIGVAVSDTFLSVATPLETVKRRKFTLDAARLSDIVAQRRLGGLVLGLPRNMDGSEGPRCQSTRAFARNLDKSIGSDLPITFWDERLSTVAAERALLEADTSRKRRAEVIDHVAAAYILQGALDRIRVIRAEQDQE.

Belongs to the YqgF nuclease family.

It is found in the cytoplasm. Functionally, could be a nuclease involved in processing of the 5'-end of pre-16S rRNA. This is Putative pre-16S rRNA nuclease from Roseobacter denitrificans (strain ATCC 33942 / OCh 114) (Erythrobacter sp. (strain OCh 114)).